Here is a 169-residue protein sequence, read N- to C-terminus: Cell division inhibitor SulA (169 aa).

A ftsZ binding region spans residues 106–112; sequence ALRTGNY. A lon protease binding region spans residues 162 to 169; that stretch reads KIHSNLYH.

This sequence belongs to the SulA family. As to quaternary structure, interacts with FtsZ. Post-translationally, is rapidly cleaved and degraded by the Lon protease once DNA damage is repaired.

Component of the SOS system and an inhibitor of cell division. Accumulation of SulA causes rapid cessation of cell division and the appearance of long, non-septate filaments. In the presence of GTP, binds a polymerization-competent form of FtsZ in a 1:1 ratio, thus inhibiting FtsZ polymerization and therefore preventing it from participating in the assembly of the Z ring. This mechanism prevents the premature segregation of damaged DNA to daughter cells during cell division. This chain is Cell division inhibitor SulA, found in Shigella boydii serotype 4 (strain Sb227).